The chain runs to 227 residues: Lipoprotein-releasing system ATP-binding protein LolD (227 aa).

The 222-residue stretch at 6-227 (LTSQKLYKSY…LHEGSLYARE (222 aa)) folds into the ABC transporter domain. ATP is bound at residue 42–49 (GPSGSGKS).

This sequence belongs to the ABC transporter superfamily. Lipoprotein translocase (TC 3.A.1.125) family. In terms of assembly, the complex is composed of two ATP-binding proteins (LolD) and two transmembrane proteins (LolC and LolE).

Its subcellular location is the cell inner membrane. In terms of biological role, part of the ABC transporter complex LolCDE involved in the translocation of mature outer membrane-directed lipoproteins, from the inner membrane to the periplasmic chaperone, LolA. Responsible for the formation of the LolA-lipoprotein complex in an ATP-dependent manner. This Legionella pneumophila (strain Paris) protein is Lipoprotein-releasing system ATP-binding protein LolD.